A 381-amino-acid chain; its full sequence is Succinyl-diaminopimelate desuccinylase (381 aa).

Position 68 (His-68) interacts with Zn(2+). Residue Asp-70 is part of the active site. Asp-101 is a Zn(2+) binding site. Glu-135 serves as the catalytic Proton acceptor. Zn(2+)-binding residues include Glu-136, Glu-164, and His-350.

Belongs to the peptidase M20A family. DapE subfamily. Homodimer. The cofactor is Zn(2+). Co(2+) is required as a cofactor.

The enzyme catalyses N-succinyl-(2S,6S)-2,6-diaminopimelate + H2O = (2S,6S)-2,6-diaminopimelate + succinate. Its pathway is amino-acid biosynthesis; L-lysine biosynthesis via DAP pathway; LL-2,6-diaminopimelate from (S)-tetrahydrodipicolinate (succinylase route): step 3/3. Catalyzes the hydrolysis of N-succinyl-L,L-diaminopimelic acid (SDAP), forming succinate and LL-2,6-diaminopimelate (DAP), an intermediate involved in the bacterial biosynthesis of lysine and meso-diaminopimelic acid, an essential component of bacterial cell walls. This is Succinyl-diaminopimelate desuccinylase from Neisseria gonorrhoeae (strain ATCC 700825 / FA 1090).